The chain runs to 104 residues: Thioredoxin (104 aa).

One can recognise a Thioredoxin domain in the interval 2–104; sequence AIVKVTDSDF…NLAEVLDKHL (103 aa). C29 and C32 form a disulfide bridge.

This sequence belongs to the thioredoxin family.

Component of the thioredoxin-thioredoxin reductase system. Participates in various redox reactions through the reversible oxidation of its active center dithiol to a disulfide and catalyzes dithiol-disulfide exchange reactions. This is Thioredoxin (trxA) from Staphylococcus epidermidis (strain ATCC 35984 / DSM 28319 / BCRC 17069 / CCUG 31568 / BM 3577 / RP62A).